We begin with the raw amino-acid sequence, 227 residues long: MLCCMRRTKQVEKNDEDQKIEQDGVKPEDKAHKAATKIQASFRGHITRKKLKGEKKGDAPAAEAEAKEKDDAPVADGVEKKEGDGSATTDAAPATSPKAEEPSKAGDAPSEEKKGEGDAAPSEEKAGSAETESAAKATTDNSPSSKAEDGPAKEEPKQADVPAAVTDAAATTPAAEDAATKAAQPPTETAESSQAEEEKDAVDEAKPKESARQDEGKEDPEADQEHA.

Positions 1-227 are disordered; it reads MLCCMRRTKQ…EDPEADQEHA (227 aa). S-palmitoyl cysteine attachment occurs at residues C3 and C4. A compositionally biased stretch (basic and acidic residues) spans 9–32; the sequence is KQVEKNDEDQKIEQDGVKPEDKAH. Residues 31-60 enclose the IQ domain; sequence AHKAATKIQASFRGHITRKKLKGEKKGDAP. A Phosphoserine; by PHK modification is found at S41. A compositionally biased stretch (basic and acidic residues) spans 54 to 84; sequence EKKGDAPAAEAEAKEKDDAPVADGVEKKEGD. The segment covering 85 to 97 has biased composition (low complexity); it reads GSATTDAAPATSP. Phosphoserine occurs at positions 86 and 96. Residues 98–127 show a composition bias toward basic and acidic residues; sequence KAEEPSKAGDAPSEEKKGEGDAAPSEEKAG. Positions 128–139 are enriched in low complexity; the sequence is SAETESAAKATT. T138 is modified (phosphothreonine). 3 positions are modified to phosphoserine: S142, S144, and S145. Positions 146-158 are enriched in basic and acidic residues; the sequence is KAEDGPAKEEPKQ. A compositionally biased stretch (low complexity) spans 159–193; that stretch reads ADVPAAVTDAAATTPAAEDAATKAAQPPTETAESS. T172 carries the post-translational modification Phosphothreonine. A phosphoserine; by CK2 mark is found at S192 and S193. Positions 202-215 are enriched in basic and acidic residues; that stretch reads VDEAKPKESARQDE. Residues 216–227 show a composition bias toward acidic residues; sequence GKEDPEADQEHA.

This sequence belongs to the neuromodulin family. Identified in a complex containing FGFR4, NCAM1, CDH2, PLCG1, FRS2, SRC, SHC1, GAP43 and CTTN. Interacts (via IQ domain) with calmodulin. Binds calmodulin with a greater affinity in the absence of Ca(2+) than in its presence. Post-translationally, phosphorylated. Phosphorylation of this protein by a protein kinase C is specifically correlated with certain forms of synaptic plasticity. In terms of processing, palmitoylated by ZDHHC3. Palmitoylation is regulated by ARF6 and is essential for plasma membrane association and axonal and dendritic filopodia induction. Deacylated by LYPLA2. As to expression, expressed in the hippocampus (at protein level). Expressed in the dorsal root ganglion and the spinal cord (at protein level).

The protein localises to the cell membrane. It localises to the cell projection. It is found in the growth cone membrane. The protein resides in the synapse. Its subcellular location is the filopodium membrane. The protein localises to the perikaryon. It localises to the dendrite. It is found in the axon. The protein resides in the cytoplasm. In terms of biological role, this protein is associated with nerve growth. It is a major component of the motile 'growth cones' that form the tips of elongating axons. Plays a role in axonal and dendritic filopodia induction. This chain is Neuromodulin (Gap43), found in Mus musculus (Mouse).